The chain runs to 409 residues: MAAPGGARRRPLLLLLFAGLVHGASAVFVVKNGNGTACIMADFSATFLTSYDTRSGPQNKSFELPAGAEVSNSSSCGKENASDSSLVITFGRGHTLTLIFTRNATRYEVQLMRFAYNLSDTDTFPNSSSTGVKTVESATDIKADINKTYRCVSETQVNMDNVTVTLRDAAIQAYLSSSNFSREETRCEQDLPTPTTPPQPAPTPAPASPAVFRYNVSGSNGTCLLASMGLQLNVTYRRVDNKTVTREFNVNPNKTTFGGNCSATLATLELHSENLLLLALQFVMNESSSRVFLQGVQLNLTLPDAKEGSFTATNSSLRALQATAGNSYKCNAEQRLRVTSSFSLNMFRVWLQAFRVDGDKFGPVEECQLDENSMLIPIAVGGALAGLVLIVLLAYLIGRKRSHAGYQTI.

A signal peptide spans 1–25; it reads MAAPGGARRRPLLLLLFAGLVHGAS. The segment at 26–187 is first lumenal domain; that stretch reads AVFVVKNGNG…SNFSREETRC (162 aa). Residues 26 to 374 are Lumenal-facing; that stretch reads AVFVVKNGNG…EECQLDENSM (349 aa). N-linked (GlcNAc...) asparagine glycans are attached at residues Asn34, Asn59, Asn72, Asn80, Asn103, Asn117, Asn126, Asn146, Asn161, and Asn179. Cys38 and Cys76 are oxidised to a cystine. Cys151 and Cys187 are joined by a disulfide. Residues 180–207 form a disordered region; the sequence is FSREETRCEQDLPTPTTPPQPAPTPAPA. The hinge stretch occupies residues 188–219; sequence EQDLPTPTTPPQPAPTPAPASPAVFRYNVSGS. The span at 194-207 shows a compositional bias: pro residues; sequence PTTPPQPAPTPAPA. 8 N-linked (GlcNAc...) asparagine glycosylation sites follow: Asn215, Asn220, Asn241, Asn253, Asn260, Asn285, Asn299, and Asn314. A second lumenal domain region spans residues 220–374; the sequence is NGTCLLASMG…EECQLDENSM (155 aa). Cys223 and Cys261 are oxidised to a cystine. The cysteines at positions 330 and 367 are disulfide-linked. A helical membrane pass occupies residues 375–398; the sequence is LIPIAVGGALAGLVLIVLLAYLIG. Topologically, residues 399–409 are cytoplasmic; it reads RKRSHAGYQTI.

It belongs to the LAMP family. As to quaternary structure, interacts with ABCB9; this interaction strongly stabilizes ABCB9 and protects ABCB9 against lysosomal degradation. Interacts with FURIN. Interacts with TMEM175; inhibiting the proton channel activity of TMEM175. Post-translationally, O- and N-glycosylated; some of the N-glycans attached to LAMP-1 are polylactosaminoglycans.

The protein resides in the lysosome membrane. It localises to the endosome membrane. It is found in the late endosome membrane. Its subcellular location is the cell membrane. The protein localises to the cytolytic granule membrane. Functionally, lysosomal membrane glycoprotein which plays an important role in lysosome biogenesis, lysosomal pH regulation, autophagy and cholesterol homeostasis. Acts as an important regulator of lysosomal lumen pH regulation by acting as a direct inhibitor of the proton channel TMEM175, facilitating lysosomal acidification for optimal hydrolase activity. Also plays an important role in NK-cells cytotoxicity. Mechanistically, participates in cytotoxic granule movement to the cell surface and perforin trafficking to the lytic granule. In addition, protects NK-cells from degranulation-associated damage induced by their own cytotoxic granule content. Presents carbohydrate ligands to selectins. This chain is Lysosome-associated membrane glycoprotein 1 (LAMP1), found in Bos taurus (Bovine).